A 119-amino-acid polypeptide reads, in one-letter code: Large ribosomal subunit protein bL20 (119 aa).

It belongs to the bacterial ribosomal protein bL20 family.

In terms of biological role, binds directly to 23S ribosomal RNA and is necessary for the in vitro assembly process of the 50S ribosomal subunit. It is not involved in the protein synthesizing functions of that subunit. This chain is Large ribosomal subunit protein bL20, found in Rhodopseudomonas palustris (strain BisA53).